Consider the following 875-residue polypeptide: Phosphoenolpyruvate carboxylase (875 aa).

Residues H137 and K542 contribute to the active site.

It belongs to the PEPCase type 1 family. The cofactor is Mg(2+).

The catalysed reaction is oxaloacetate + phosphate = phosphoenolpyruvate + hydrogencarbonate. Functionally, forms oxaloacetate, a four-carbon dicarboxylic acid source for the tricarboxylic acid cycle. The protein is Phosphoenolpyruvate carboxylase of Pseudomonas putida (strain GB-1).